The chain runs to 35 residues: Photosystem II reaction center protein T (35 aa).

Residues 3 to 23 (ALVYTFLLVSTLGIIFFAIFF) traverse the membrane as a helical segment.

It belongs to the PsbT family. PSII is composed of 1 copy each of membrane proteins PsbA, PsbB, PsbC, PsbD, PsbE, PsbF, PsbH, PsbI, PsbJ, PsbK, PsbL, PsbM, PsbT, PsbY, PsbZ, Psb30/Ycf12, at least 3 peripheral proteins of the oxygen-evolving complex and a large number of cofactors. It forms dimeric complexes.

Its subcellular location is the plastid. The protein resides in the chloroplast thylakoid membrane. Functionally, found at the monomer-monomer interface of the photosystem II (PS II) dimer, plays a role in assembly and dimerization of PSII. PSII is a light-driven water plastoquinone oxidoreductase, using light energy to abstract electrons from H(2)O, generating a proton gradient subsequently used for ATP formation. In Taxus brevifolia (Pacific yew), this protein is Photosystem II reaction center protein T.